Here is a 201-residue protein sequence, read N- to C-terminus: Cytochrome c oxidase subunit 3 (201 aa).

4 helical membrane passes run 25-45 (VLGL…LFAA), 65-85 (LFVP…IHYG), 100-120 (WYWI…YEYL), and 137-157 (VMTG…LGVI).

This sequence belongs to the cytochrome c oxidase subunit 3 family.

The protein resides in the cell membrane. The enzyme catalyses 4 Fe(II)-[cytochrome c] + O2 + 8 H(+)(in) = 4 Fe(III)-[cytochrome c] + 2 H2O + 4 H(+)(out). The protein is Cytochrome c oxidase subunit 3 (ctaE) of Thermostichus vulcanus (Synechococcus vulcanus).